Consider the following 316-residue polypeptide: Long form salivary protein D7L1 (316 aa).

The first 23 residues, 1-23 (MSHTRAVVLAVACLCLILVQVEG), serve as a signal peptide directing secretion. 4 disulfides stabilise this stretch: Cys-40-Cys-76, Cys-72-Cys-131, Cys-181-Cys-214, and Cys-255-Cys-266.

The protein belongs to the PBP/GOBP family.

Its subcellular location is the secreted. Modulates blood feeding of female mosquitoes on vertebrate species by binding and sequestering different mediators involved in the host response, such as biogenic amines and eicosanoids. Binds serotonin, tryptamine, histamine, leukotriene C4, leukotriene D4 and leukotriene E4. Does not bind octopamine, dopamine, noradrenaline, adrenaline and prostaglandin PGF2alpha. In Anopheles atroparvus (European mosquito), this protein is Long form salivary protein D7L1.